We begin with the raw amino-acid sequence, 256 residues long: Pimeloyl-[acyl-carrier protein] methyl ester esterase (256 aa).

Positions 15-242 (HLVLLHGWGL…AAHAPFISHP (228 aa)) constitute an AB hydrolase-1 domain. Residues Trp22, 82–83 (SL), and 143–147 (FLALQ) each bind substrate. The active-site Nucleophile is the Ser82. Residues Asp207 and His235 contribute to the active site. His235 serves as a coordination point for substrate.

Belongs to the AB hydrolase superfamily. Carboxylesterase BioH family. As to quaternary structure, monomer.

Its subcellular location is the cytoplasm. The catalysed reaction is 6-carboxyhexanoyl-[ACP] methyl ester + H2O = 6-carboxyhexanoyl-[ACP] + methanol + H(+). The protein operates within cofactor biosynthesis; biotin biosynthesis. Functionally, the physiological role of BioH is to remove the methyl group introduced by BioC when the pimeloyl moiety is complete. It allows to synthesize pimeloyl-ACP via the fatty acid synthetic pathway through the hydrolysis of the ester bonds of pimeloyl-ACP esters. This Escherichia coli O7:K1 (strain IAI39 / ExPEC) protein is Pimeloyl-[acyl-carrier protein] methyl ester esterase.